The chain runs to 302 residues: Acetaldehyde dehydrogenase (302 aa).

12–15 (SGNI) contacts NAD(+). Cysteine 127 acts as the Acyl-thioester intermediate in catalysis. Residues 158-166 (SAGPGTRQN) and asparagine 276 contribute to the NAD(+) site.

Belongs to the acetaldehyde dehydrogenase family.

The catalysed reaction is acetaldehyde + NAD(+) + CoA = acetyl-CoA + NADH + H(+). This Geobacillus genomosp. 3 protein is Acetaldehyde dehydrogenase (nahO).